Consider the following 521-residue polypeptide: 2-isopropylmalate synthase (521 aa).

The region spanning 5-267 (VIIFDTTLRD…HTNIKHQEIH (263 aa)) is the Pyruvate carboxyltransferase domain. Mn(2+) contacts are provided by aspartate 14, histidine 202, histidine 204, and asparagine 238. Residues 392–521 (KLNYLSVQSG…FAQKTVMETL (130 aa)) form a regulatory domain region.

Belongs to the alpha-IPM synthase/homocitrate synthase family. LeuA type 1 subfamily. In terms of assembly, homodimer. Mn(2+) serves as cofactor.

It localises to the cytoplasm. The catalysed reaction is 3-methyl-2-oxobutanoate + acetyl-CoA + H2O = (2S)-2-isopropylmalate + CoA + H(+). Its pathway is amino-acid biosynthesis; L-leucine biosynthesis; L-leucine from 3-methyl-2-oxobutanoate: step 1/4. In terms of biological role, catalyzes the condensation of the acetyl group of acetyl-CoA with 3-methyl-2-oxobutanoate (2-ketoisovalerate) to form 3-carboxy-3-hydroxy-4-methylpentanoate (2-isopropylmalate). This is 2-isopropylmalate synthase from Tolumonas auensis (strain DSM 9187 / NBRC 110442 / TA 4).